Here is a 623-residue protein sequence, read N- to C-terminus: Frizzled and smoothened-like protein M (623 aa).

Residues 1-18 (MKSIFIIIFILYVFQVNS) form the signal peptide. Topologically, residues 19–243 (QTIYPIDPSG…WDQLYNLSNT (225 aa)) are extracellular. An FZ domain is found at 25–163 (DPSGKCEQYI…NYSEFNLTNY (139 aa)). Cystine bridges form between Cys-30-Cys-100 and Cys-42-Cys-93. N-linked (GlcNAc...) asparagine glycosylation is found at Asn-57, Asn-106, Asn-109, Asn-154, Asn-159, Asn-169, Asn-199, and Asn-239. A helical transmembrane segment spans residues 244–264 (LAVLSTFGSLYLLVTFIILNP). Residues 265-273 (KVTSFDRMY) are Cytoplasmic-facing. Residues 274-294 (GFFNGSVFMMSLSGVILFIAG) form a helical membrane-spanning segment. Over 295 to 317 (GPRALIKDGGARISVFEDPLCSS) the chain is Extracellular. Residues 318–338 (TGFIFQLFAINAILFWAYMGF) traverse the membrane as a helical segment. Residues 339–354 (DLWWRVKYITKPLNIQ) are Cytoplasmic-facing. The helical transmembrane segment at 355–375 (KYYVPIAFTISFIFSVIPLAT) threads the bilayer. The Extracellular segment spans residues 376-397 (KNYRMVRGNIHCWVHKAVLQNT). Residues 398–418 (LFFGPLGLTLTISTGFIGLVI) form a helical membrane-spanning segment. The Cytoplasmic segment spans residues 419 to 439 (YEIYKIVKATGRGGIMKLEIK). A helical transmembrane segment spans residues 440–460 (PILNIVLIYFSFVYIFAFNFH). The Extracellular segment spans residues 461-494 (NDNNSKNTYGSIDEFFQCTLESDDPSKCTVGGPS). N-linked (GlcNAc...) asparagine glycosylation occurs at Asn-463. Residues 495-515 (IGSLGYFIYCIRIYGIYCFFL) traverse the membrane as a helical segment. Residues 516 to 623 (QGLNERAFKI…DIEIGSVNIK (108 aa)) lie on the Cytoplasmic side of the membrane. The segment at 552–590 (PSESGNSSTTAGTSTTINNSNINKKNNNSKPTLSTMDSN) is disordered. Residues 555–580 (SGNSSTTAGTSTTINNSNINKKNNNS) show a composition bias toward low complexity.

Belongs to the G-protein coupled receptor Fz/Smo family.

The protein resides in the membrane. This Dictyostelium discoideum (Social amoeba) protein is Frizzled and smoothened-like protein M (fslM-1).